Here is a 526-residue protein sequence, read N- to C-terminus: Lysine--tRNA ligase (526 aa).

Residues Glu-431 and Glu-438 each contribute to the Mg(2+) site.

This sequence belongs to the class-II aminoacyl-tRNA synthetase family. In terms of assembly, homodimer. It depends on Mg(2+) as a cofactor.

The protein resides in the cytoplasm. It carries out the reaction tRNA(Lys) + L-lysine + ATP = L-lysyl-tRNA(Lys) + AMP + diphosphate. The protein is Lysine--tRNA ligase of Chlamydia felis (strain Fe/C-56) (Chlamydophila felis).